Consider the following 255-residue polypeptide: uncharacterized protein (255 aa).

Disordered regions lie at residues 112–145 (CWPGSPLGGTGPPTNRPPRSRAWNRYRSDRPSPG) and 157–183 (GLAEHQGGGDGDVERAHAGNHRNPDAQ).

This is an uncharacterized protein from Rhodospirillum rubrum.